The sequence spans 122 residues: Large ribosomal subunit protein uL14 (122 aa).

It belongs to the universal ribosomal protein uL14 family. In terms of assembly, part of the 50S ribosomal subunit. Forms a cluster with proteins L3 and L19. In the 70S ribosome, L14 and L19 interact and together make contacts with the 16S rRNA in bridges B5 and B8.

Functionally, binds to 23S rRNA. Forms part of two intersubunit bridges in the 70S ribosome. The polypeptide is Large ribosomal subunit protein uL14 (Lactobacillus delbrueckii subsp. bulgaricus (strain ATCC 11842 / DSM 20081 / BCRC 10696 / JCM 1002 / NBRC 13953 / NCIMB 11778 / NCTC 12712 / WDCM 00102 / Lb 14)).